A 490-amino-acid chain; its full sequence is tRNA-2-methylthio-N(6)-dimethylallyladenosine synthase (490 aa).

An MTTase N-terminal domain is found at 37 to 154 (KKVYIATQGC…LPELYDKSTT (118 aa)). Residues C46, C83, C117, C198, C202, and C205 each coordinate [4Fe-4S] cluster. Residues 184 to 416 (KVEGYRAFVS…QKVIRDSTLK (233 aa)) enclose the Radical SAM core domain. The TRAM domain maps to 419-487 (EEMVGKTLRV…PHMVRGELVD (69 aa)).

The protein belongs to the methylthiotransferase family. MiaB subfamily. As to quaternary structure, monomer. [4Fe-4S] cluster is required as a cofactor.

It is found in the cytoplasm. The enzyme catalyses N(6)-dimethylallyladenosine(37) in tRNA + (sulfur carrier)-SH + AH2 + 2 S-adenosyl-L-methionine = 2-methylsulfanyl-N(6)-dimethylallyladenosine(37) in tRNA + (sulfur carrier)-H + 5'-deoxyadenosine + L-methionine + A + S-adenosyl-L-homocysteine + 2 H(+). Functionally, catalyzes the methylthiolation of N6-(dimethylallyl)adenosine (i(6)A), leading to the formation of 2-methylthio-N6-(dimethylallyl)adenosine (ms(2)i(6)A) at position 37 in tRNAs that read codons beginning with uridine. In Psychrobacter sp. (strain PRwf-1), this protein is tRNA-2-methylthio-N(6)-dimethylallyladenosine synthase.